A 99-amino-acid chain; its full sequence is DNA-directed RNA polymerase subunit omega (99 aa).

The protein belongs to the RNA polymerase subunit omega family. In terms of assembly, the RNAP catalytic core consists of 2 alpha, 1 beta, 1 beta' and 1 omega subunit. When a sigma factor is associated with the core the holoenzyme is formed, which can initiate transcription.

It carries out the reaction RNA(n) + a ribonucleoside 5'-triphosphate = RNA(n+1) + diphosphate. Its function is as follows. Promotes RNA polymerase assembly. Latches the N- and C-terminal regions of the beta' subunit thereby facilitating its interaction with the beta and alpha subunits. The protein is DNA-directed RNA polymerase subunit omega of Deinococcus geothermalis (strain DSM 11300 / CIP 105573 / AG-3a).